We begin with the raw amino-acid sequence, 125 residues long: Insulin growth factor-like family member 3 (125 aa).

The signal sequence occupies residues 1 to 24 (MRPRCCILALVCWITVFLLQCSKG).

The protein belongs to the IGFL family. Detected in the cerebellum.

Its subcellular location is the secreted. Its function is as follows. Potential ligand of the IGFLR1 cell membrane receptor. The protein is Insulin growth factor-like family member 3 (IGFL3) of Homo sapiens (Human).